Reading from the N-terminus, the 614-residue chain is Phosphomethylpyrimidine synthase (614 aa).

Residues N226, M255, Y284, H320, S340–G342, D381–R384, and E420 contribute to the substrate site. H424 serves as a coordination point for Zn(2+). Residue Y447 participates in substrate binding. H488 contributes to the Zn(2+) binding site. Positions 568, 571, and 576 each coordinate [4Fe-4S] cluster.

The protein belongs to the ThiC family. Homodimer. [4Fe-4S] cluster is required as a cofactor.

The enzyme catalyses 5-amino-1-(5-phospho-beta-D-ribosyl)imidazole + S-adenosyl-L-methionine = 4-amino-2-methyl-5-(phosphooxymethyl)pyrimidine + CO + 5'-deoxyadenosine + formate + L-methionine + 3 H(+). The protein operates within cofactor biosynthesis; thiamine diphosphate biosynthesis. Functionally, catalyzes the synthesis of the hydroxymethylpyrimidine phosphate (HMP-P) moiety of thiamine from aminoimidazole ribotide (AIR) in a radical S-adenosyl-L-methionine (SAM)-dependent reaction. The protein is Phosphomethylpyrimidine synthase of Acidovorax ebreus (strain TPSY) (Diaphorobacter sp. (strain TPSY)).